The primary structure comprises 427 residues: Rhodocoxin reductase (427 aa).

Residue 2–34 (SIVIIGSGQAGFEAAVSLRSHGFSGTITLVGDE) coordinates FAD. 144-172 (SLVVIGAGFIGLEVAAAARKKGLDVTVVE) is a binding site for NAD(+).

This sequence belongs to the FAD-dependent oxidoreductase family. FAD serves as cofactor.

Its function is as follows. The degradation of the thiocarbamate herbicide EPTC by cytochrome CYP116 (thcB) requires the participation of a flavoprotein, rhodocoxin reductase, and an iron-sulfur protein, rhodocoxin, to mediate the transfer of electrons from NADH to P450 for oxygen activation. The protein is Rhodocoxin reductase (thcD) of Rhodococcus erythropolis (Arthrobacter picolinophilus).